A 365-amino-acid chain; its full sequence is tRNA(Met) cytidine acetate ligase (365 aa).

Residues 7 to 20 (IAEF…HKYL), Gly96, Asn152, and Arg175 each bind ATP.

Belongs to the TmcAL family.

Its subcellular location is the cytoplasm. It carries out the reaction cytidine(34) in elongator tRNA(Met) + acetate + ATP = N(4)-acetylcytidine(34) in elongator tRNA(Met) + AMP + diphosphate. Catalyzes the formation of N(4)-acetylcytidine (ac(4)C) at the wobble position of elongator tRNA(Met), using acetate and ATP as substrates. First activates an acetate ion to form acetyladenylate (Ac-AMP) and then transfers the acetyl group to tRNA to form ac(4)C34. This Streptococcus pneumoniae (strain ATCC 700669 / Spain 23F-1) protein is tRNA(Met) cytidine acetate ligase.